The primary structure comprises 155 residues: 6,7-dimethyl-8-ribityllumazine synthase (155 aa).

5-amino-6-(D-ribitylamino)uracil is bound by residues tryptophan 23, alanine 57 to glutamate 59, and cysteine 81 to isoleucine 83. Aspartate 86 to threonine 87 is a (2S)-2-hydroxy-3-oxobutyl phosphate binding site. Histidine 89 acts as the Proton donor in catalysis. Asparagine 114 provides a ligand contact to 5-amino-6-(D-ribitylamino)uracil. Residue arginine 128 participates in (2S)-2-hydroxy-3-oxobutyl phosphate binding.

Belongs to the DMRL synthase family. In terms of assembly, forms an icosahedral capsid composed of 60 subunits, arranged as a dodecamer of pentamers.

It catalyses the reaction (2S)-2-hydroxy-3-oxobutyl phosphate + 5-amino-6-(D-ribitylamino)uracil = 6,7-dimethyl-8-(1-D-ribityl)lumazine + phosphate + 2 H2O + H(+). The protein operates within cofactor biosynthesis; riboflavin biosynthesis; riboflavin from 2-hydroxy-3-oxobutyl phosphate and 5-amino-6-(D-ribitylamino)uracil: step 1/2. Functionally, catalyzes the formation of 6,7-dimethyl-8-ribityllumazine by condensation of 5-amino-6-(D-ribitylamino)uracil with 3,4-dihydroxy-2-butanone 4-phosphate. This is the penultimate step in the biosynthesis of riboflavin. This Stenotrophomonas maltophilia (strain R551-3) protein is 6,7-dimethyl-8-ribityllumazine synthase.